The following is a 95-amino-acid chain: Aspartyl/glutamyl-tRNA(Asn/Gln) amidotransferase subunit C (95 aa).

Belongs to the GatC family. In terms of assembly, heterotrimer of A, B and C subunits.

The catalysed reaction is L-glutamyl-tRNA(Gln) + L-glutamine + ATP + H2O = L-glutaminyl-tRNA(Gln) + L-glutamate + ADP + phosphate + H(+). It carries out the reaction L-aspartyl-tRNA(Asn) + L-glutamine + ATP + H2O = L-asparaginyl-tRNA(Asn) + L-glutamate + ADP + phosphate + 2 H(+). Allows the formation of correctly charged Asn-tRNA(Asn) or Gln-tRNA(Gln) through the transamidation of misacylated Asp-tRNA(Asn) or Glu-tRNA(Gln) in organisms which lack either or both of asparaginyl-tRNA or glutaminyl-tRNA synthetases. The reaction takes place in the presence of glutamine and ATP through an activated phospho-Asp-tRNA(Asn) or phospho-Glu-tRNA(Gln). This Ruegeria pomeroyi (strain ATCC 700808 / DSM 15171 / DSS-3) (Silicibacter pomeroyi) protein is Aspartyl/glutamyl-tRNA(Asn/Gln) amidotransferase subunit C.